A 477-amino-acid polypeptide reads, in one-letter code: RTX-III toxin determinant D (477 aa).

At 1 to 59 (MKLWILGLGEFFQRYRNIWREIWKIRKQLDTPARQKDENEFLPRHLELIETPISKKPRL) the chain is on the cytoplasmic side. The chain crosses the membrane as a helical span at residues 60–77 (IAYLIMLFLFLAIVISII). Residues 78–477 (SKVEIVASAT…ESITESLRER (400 aa)) lie on the Periplasmic side of the membrane.

This sequence belongs to the membrane fusion protein (MFP) (TC 8.A.1) family.

The protein localises to the cell inner membrane. Its function is as follows. Involved in the transport of the toxin RTX-III. This Actinobacillus pleuropneumoniae (Haemophilus pleuropneumoniae) protein is RTX-III toxin determinant D (apxIIID).